A 799-amino-acid polypeptide reads, in one-letter code: High affinity nerve growth factor receptor (799 aa).

Positions 1-32 (MLRGQRHGQLGWHRPAAGLGGLVTSLMLACAC) are cleaved as a signal peptide. At 33-418 (AASCRETCCP…DPVEKKDETP (386 aa)) the chain is on the extracellular side. Disulfide bonds link Cys-36–Cys-41 and Cys-40–Cys-50. Asn-67 is a glycosylation site (N-linked (GlcNAc...) asparagine). 2 LRR repeats span residues 90-113 (LGEL…AFHF) and 116-137 (RLSH…TVQG). N-linked (GlcNAc...) asparagine glycans are attached at residues Asn-121, Asn-190, Asn-204, Asn-255, Asn-264, Asn-320, Asn-325, Asn-341, Asn-361, and Asn-404. The 72-residue stretch at 148 to 219 (NPLHCSCALL…GDDVFLQCQV (72 aa)) folds into the LRRCT domain. Cys-154 and Cys-193 form a disulfide bridge. Ig-like C2-type domains are found at residues 196-285 (PSVK…VSVS) and 295-368 (AVEQ…LAAN). 2 cysteine pairs are disulfide-bonded: Cys-217–Cys-267 and Cys-302–Cys-348. The chain crosses the membrane as a helical span at residues 419–442 (FGVSVAVGLAVSAALFLSALLLVL). The Cytoplasmic portion of the chain corresponds to 443 to 799 (NKCGQRSKFG…APPSYLDVLG (357 aa)). The segment at 472-493 (MTLGGSSLSPTEGKGSGLQGHI) is interaction with SQSTM1. The residue at position 499 (Tyr-499) is a Phosphotyrosine; by autocatalysis. The region spanning 513–784 (IILKWELGEG…LSMKDVHARL (272 aa)) is the Protein kinase domain. ATP-binding positions include 519-527 (LGEGAFGKV) and Lys-547. The active-site Proton acceptor is Asp-653. 4 positions are modified to phosphotyrosine; by autocatalysis: Tyr-679, Tyr-683, Tyr-684, and Tyr-794.

The protein belongs to the protein kinase superfamily. Tyr protein kinase family. Insulin receptor subfamily. In terms of assembly, exists in a dynamic equilibrium between monomeric (low affinity) and dimeric (high affinity) structures. Homodimerization is induced by binding of a NGF dimer. Found in a complex, at least composed of KIDINS220, MAGI2, NTRK1 and RAPGEF2; the complex is mainly formed at late endosomes in a nerve growth factor (NGF)-dependent manner. Interacts with RAPGEF2; the interaction is strengthened after NGF stimulation. Interacts with SQSTM1; bridges NTRK1 to NGFR. Forms a ternary complex with NGFR and KIDINS220; this complex is affected by the expression levels of KIDINS220 and an increase in KIDINS220 expression leads to a decreased association of NGFR and NTRK1. Interacts (phosphorylated upon activation by NGF) with SHC1; mediates SHC1 phosphorylation and activation. Interacts (phosphorylated upon activation by NGF) with PLCG1; mediates PLCG1 phosphorylation and activation. Interacts (phosphorylated) with SH2B1 and SH2B2. Interacts with GRB2. Interacts with PIK3R1. Interacts with FRS2. Interacts with SORT1; may regulate NTRK1 anterograde axonal transport. Interacts with SH2D1A; regulates NTRK1. Interacts with NRADD. Interacts with RAB7A. Interacts with PTPRS. Interacts with USP36; USP36 does not deubiquitinate NTRK1. Interacts with GGA3. Interacts with TSPAN1; this interaction promotes NTRK1 stability. Ligand-mediated autophosphorylation. Interaction with SQSTM1 is phosphotyrosine-dependent. Autophosphorylation at Tyr-499 mediates interaction and phosphorylation of SHC1. In terms of processing, N-glycosylated. Post-translationally, ubiquitinated. Undergoes polyubiquitination upon activation; regulated by NGFR. Ubiquitination by NEDD4L leads to degradation. Ubiquitination regulates the internalization of the receptor. Isoform Trka-II is primarily expressed in neuronal cells; isoform Trka-I is found in non-neuronal tissues.

The protein localises to the cell membrane. Its subcellular location is the early endosome membrane. It is found in the late endosome membrane. The protein resides in the recycling endosome membrane. The enzyme catalyses L-tyrosyl-[protein] + ATP = O-phospho-L-tyrosyl-[protein] + ADP + H(+). The pro-survival signaling effect of NTRK1 in neurons requires its endocytosis into signaling early endosomes and its retrograde axonal transport. This is regulated by different proteins including CFL1, RAC1 and SORT1. NTF3 is unable to induce this signaling probably due to the lability of the NTF3-NTRK1 complex in endosomes. SH2D1A inhibits the autophosphorylation of the receptor, and alters the recruitment and activation of downstream effectors and signaling cascades. Regulated by NGFR. In terms of biological role, receptor tyrosine kinase involved in the development and the maturation of the central and peripheral nervous systems through regulation of proliferation, differentiation and survival of sympathetic and nervous neurons. High affinity receptor for NGF which is its primary ligand. Can also bind and be activated by NTF3/neurotrophin-3. However, NTF3 only supports axonal extension through NTRK1 but has no effect on neuron survival. Upon dimeric NGF ligand-binding, undergoes homodimerization, autophosphorylation and activation. Recruits, phosphorylates and/or activates several downstream effectors including SHC1, FRS2, SH2B1, SH2B2 and PLCG1 that regulate distinct overlapping signaling cascades driving cell survival and differentiation. Through SHC1 and FRS2 activates a GRB2-Ras-MAPK cascade that regulates cell differentiation and survival. Through PLCG1 controls NF-Kappa-B activation and the transcription of genes involved in cell survival. Through SHC1 and SH2B1 controls a Ras-PI3 kinase-AKT1 signaling cascade that is also regulating survival. In absence of ligand and activation, may promote cell death, making the survival of neurons dependent on trophic factors. The chain is High affinity nerve growth factor receptor (Ntrk1) from Rattus norvegicus (Rat).